Here is a 302-residue protein sequence, read N- to C-terminus: MKIIAVLGSSGSGKSALAHRIAMEQNCKIFSLDSLSIYKYLDIASAKPTLLEQSQVCYYALNILEPHQKSNVMIFKDLLLQSIEDIKNNSPHTPLLIVGGSSFFLKSIMEGLSPMPPLEEHEEWVKSLGNISMQYAQLTQIDKTYAQSLSPTDTYRICKALALFKATNTPPSIYFATHKKESLGYDIEIFCLECERDELRERIAKRTKAMIQKGIVEEVQNVLEAYGAQAPALNAIGAKECVNFLQGKVATLQQLEEQIFFHTCQLAKRQRTFNRTQFAQITHLKEKALEAQLIQQIHNNIL.

8–15 (GSSGSGKS) lines the ATP pocket. 10 to 15 (SGSGKS) serves as a coordination point for substrate. The segment at 33-36 (DSLS) is interaction with substrate tRNA.

It belongs to the IPP transferase family. Monomer. It depends on Mg(2+) as a cofactor.

The enzyme catalyses adenosine(37) in tRNA + dimethylallyl diphosphate = N(6)-dimethylallyladenosine(37) in tRNA + diphosphate. Functionally, catalyzes the transfer of a dimethylallyl group onto the adenine at position 37 in tRNAs that read codons beginning with uridine, leading to the formation of N6-(dimethylallyl)adenosine (i(6)A). This chain is tRNA dimethylallyltransferase, found in Helicobacter hepaticus (strain ATCC 51449 / 3B1).